The following is a 252-amino-acid chain: Coenzyme F420:L-glutamate ligase (252 aa).

GTP-binding positions include 12-15 (VPLE), 44-45 (HT), and Lys-49. An a divalent metal cation-binding site is contributed by Asp-114. Residue Asn-117 coordinates GTP. Residues Asp-155, Thr-156, and Gln-213 each coordinate a divalent metal cation. Position 211-218 (211-218 (MGQADEGT)) interacts with GTP.

The protein belongs to the CofE family. Homodimer. The cofactor is Mg(2+). Mn(2+) is required as a cofactor. K(+) serves as cofactor.

The enzyme catalyses oxidized coenzyme F420-0 + GTP + L-glutamate = oxidized coenzyme F420-1 + GDP + phosphate + H(+). It carries out the reaction oxidized coenzyme F420-1 + GTP + L-glutamate = oxidized coenzyme F420-2 + GDP + phosphate + H(+). It functions in the pathway cofactor biosynthesis; coenzyme F420 biosynthesis. Its function is as follows. Catalyzes the GTP-dependent successive addition of two or more gamma-linked L-glutamates to the L-lactyl phosphodiester of 7,8-didemethyl-8-hydroxy-5-deazariboflavin (F420-0) to form coenzyme F420-0-glutamyl-glutamate (F420-2) or polyglutamated F420 derivatives. The protein is Coenzyme F420:L-glutamate ligase of Methanopyrus kandleri (strain AV19 / DSM 6324 / JCM 9639 / NBRC 100938).